Here is a 1032-residue protein sequence, read N- to C-terminus: Y' element ATP-dependent helicase YPR204W (1032 aa).

Residues 1–175 (MADTPSVAVQ…LQRIGLTGLA (175 aa)) enclose the Helicase ATP-binding domain. Residue 11 to 18 (APPGYGKT) participates in ATP binding. The DEAH box motif lies at 121–124 (DEFH). Residues 232–381 (KLLLALFEIE…EFYGLESKKG (150 aa)) enclose the Helicase C-terminal domain. Positions 455-634 (ANASTNATTN…ATTTESTNAS (180 aa)) are enriched in low complexity. Residues 455-658 (ANASTNATTN…RFHPVTDINK (204 aa)) form a disordered region. The span at 635-658 (AKEDANKDGNAEDNRFHPVTDINK) shows a compositional bias: basic and acidic residues.

The protein belongs to the helicase family. Yeast subtelomeric Y' repeat subfamily.

Functionally, catalyzes DNA unwinding and is involved in telomerase-independent telomere maintenance. This is Y' element ATP-dependent helicase YPR204W from Saccharomyces cerevisiae (strain ATCC 204508 / S288c) (Baker's yeast).